A 431-amino-acid polypeptide reads, in one-letter code: Guanine nucleotide exchange factor rei-2 (431 aa).

Over residues 1-21 (MDETATSSEVTETFVSDPTTR) the composition is skewed to polar residues. A disordered region spans residues 1-28 (MDETATSSEVTETFVSDPTTRQFEEDGH). Coiled-coil stretches lie at residues 149 to 171 (EVLN…AESL) and 214 to 247 (LEAQ…RISE). A disordered region spans residues 249 to 298 (IHEERSTGSLESAVSSDQEDQKSDFKSSESLPGNPPPYAPTAPPPYEDKY). Residues 255-264 (TGSLESAVSS) are compositionally biased toward polar residues. Positions 281-293 (GNPPPYAPTAPPP) are enriched in pro residues.

Belongs to the SH3BP5 family. As to quaternary structure, interacts with rab-11.1. Binds preferentially to the GDP-bound form of rab-11.1.

Its function is as follows. Guanine nucleotide exchange factor for Rab GTPase Rab-11.1. May spatially and temporally regulate the distribution of Rab-11.1 to target membranes during embryogenesis. May play a role in cytokinesis, probably by targeting rab-11.1 to the cleavage furrows. This is Guanine nucleotide exchange factor rei-2 from Caenorhabditis elegans.